A 306-amino-acid polypeptide reads, in one-letter code: Protein FAM228A (306 aa).

The segment at 237 to 277 (HASKLSQQNKGAEKKGLALGTRAQRPRSWAAADSPQGTPLV) is disordered. A Phosphoserine modification is found at Ser-270.

It belongs to the FAM228 family.

This Rattus norvegicus (Rat) protein is Protein FAM228A (Fam228a).